Consider the following 75-residue polypeptide: Vacuolar ATPase assembly integral membrane protein VMA21 (75 aa).

Topologically, residues Met-1–Gly-8 are cytoplasmic. Residues Val-9 to Phe-29 traverse the membrane as a helical segment. Residues Ser-30–Ser-41 are Lumenal-facing. A helical membrane pass occupies residues Gly-42 to Met-62. The Cytoplasmic portion of the chain corresponds to Glu-63–Asp-75.

Belongs to the VMA21 family.

It is found in the endoplasmic reticulum membrane. The protein resides in the endoplasmic reticulum-Golgi intermediate compartment membrane. It localises to the cytoplasmic vesicle. Its subcellular location is the COPII-coated vesicle membrane. Functionally, required for the assembly of the V0 complex of the vacuolar ATPase (V-ATPase) in the endoplasmic reticulum. The protein is Vacuolar ATPase assembly integral membrane protein VMA21 of Vanderwaltozyma polyspora (strain ATCC 22028 / DSM 70294 / BCRC 21397 / CBS 2163 / NBRC 10782 / NRRL Y-8283 / UCD 57-17) (Kluyveromyces polysporus).